Consider the following 874-residue polypeptide: Valine--tRNA ligase (874 aa).

A 'HIGH' region motif is present at residues 46–56 (PNVTGHLHIGH). The 'KMSKS' region motif lies at 523–527 (KMSKS). Position 526 (Lys-526) interacts with ATP. Residues 805–874 (DYVFQMKKAS…TLTDLKQKVK (70 aa)) are a coiled coil.

This sequence belongs to the class-I aminoacyl-tRNA synthetase family. ValS type 1 subfamily. Monomer.

The protein resides in the cytoplasm. The enzyme catalyses tRNA(Val) + L-valine + ATP = L-valyl-tRNA(Val) + AMP + diphosphate. Functionally, catalyzes the attachment of valine to tRNA(Val). As ValRS can inadvertently accommodate and process structurally similar amino acids such as threonine, to avoid such errors, it has a 'posttransfer' editing activity that hydrolyzes mischarged Thr-tRNA(Val) in a tRNA-dependent manner. This chain is Valine--tRNA ligase, found in Ureaplasma parvum serovar 3 (strain ATCC 700970).